Here is a 509-residue protein sequence, read N- to C-terminus: Phytase A (509 aa).

The first 15 residues, 1–15, serve as a signal peptide directing secretion; it reads MFLLMVPLFSYLAAA. The cysteines at positions 27 and 36 are disulfide-linked. Positions 46, 47, 75, 76, 79, 82, and 164 each coordinate 1D-myo-inositol hexakisphosphate. 4 disulfide bridges follow: cysteine 65-cysteine 444, cysteine 216-cysteine 507, cysteine 266-cysteine 295, and cysteine 478-cysteine 486. Histidine 76 (nucleophile) is an active-site residue. Residues asparagine 171 and asparagine 208 are each glycosylated (N-linked (GlcNAc...) asparagine). Lysine 314 is a binding site for 1D-myo-inositol hexakisphosphate. Residues asparagine 348, asparagine 352, and asparagine 367 are each glycosylated (N-linked (GlcNAc...) asparagine). Residues histidine 376 and aspartate 377 each coordinate 1D-myo-inositol hexakisphosphate. A glycan (N-linked (GlcNAc...) asparagine) is linked at asparagine 401.

This sequence belongs to the histidine acid phosphatase family. As to quaternary structure, monomer.

The protein localises to the secreted. It catalyses the reaction 1D-myo-inositol hexakisphosphate + H2O = 1D-myo-inositol 1,2,4,5,6-pentakisphosphate + phosphate. It carries out the reaction 1D-myo-inositol 1,2,4,5,6-pentakisphosphate + H2O = 1D-myo-inositol 1,2,5,6-tetrakisphosphate + phosphate. The enzyme catalyses 1D-myo-inositol 1,2,5,6-tetrakisphosphate + H2O = 1D-myo-inositol 1,2,6-trisphosphate + phosphate. The catalysed reaction is 1D-myo-inositol 1,2,6-trisphosphate + H2O = 1D-myo-inositol 1,2-bisphosphate + phosphate. It catalyses the reaction 1D-myo-inositol 1,2-bisphosphate + H2O = 1D-myo-inositol 2-phosphate + phosphate. Catalyzes the phosphate monoester hydrolysis of phytic acid (myo-inositol hexakisphosphate), which results in the stepwise formation of myo-inositol pentakis-, tetrakis-, tris-, bis-, and monophosphates, as well as the liberation of inorganic phosphate. Myo-inositol 2-monophosphate is the end product. Is also able to dephosphorylate the classic acid phosphatase substrate p-nitrophenyl phosphate. This chain is Phytase A (pht-1), found in Neurospora crassa (strain ATCC 24698 / 74-OR23-1A / CBS 708.71 / DSM 1257 / FGSC 987).